A 194-amino-acid chain; its full sequence is Glycerol-3-phosphate acyltransferase (194 aa).

5 helical membrane-spanning segments follow: residues 4-24 (ELIL…LLLA), 80-100 (WVAA…FLGF), 112-132 (VFLG…IGIV), 137-157 (YISL…AAVE), and 161-181 (LLVG…RENI).

Belongs to the PlsY family. Probably interacts with PlsX.

Its subcellular location is the cell inner membrane. It catalyses the reaction an acyl phosphate + sn-glycerol 3-phosphate = a 1-acyl-sn-glycero-3-phosphate + phosphate. It participates in lipid metabolism; phospholipid metabolism. Catalyzes the transfer of an acyl group from acyl-phosphate (acyl-PO(4)) to glycerol-3-phosphate (G3P) to form lysophosphatidic acid (LPA). This enzyme utilizes acyl-phosphate as fatty acyl donor, but not acyl-CoA or acyl-ACP. The protein is Glycerol-3-phosphate acyltransferase of Geobacter sulfurreducens (strain ATCC 51573 / DSM 12127 / PCA).